The following is a 528-amino-acid chain: Na(+)/H(+) antiporter NhaB (528 aa).

11 consecutive transmembrane segments (helical) span residues 23-45, 66-86, 95-115, 139-159, 203-223, 241-261, 310-330, 349-369, 390-410, 448-468, and 476-496; these read FAIL…VAGW, PGGL…SQVL, VLLL…LLLF, AFLS…AVAV, LLMH…VGEP, LRMS…CFLV, LIIG…SVII, EEAL…GVII, LVIF…VFVG, ATPN…APLI, and VWMA…AIQF.

Belongs to the NhaB Na(+)/H(+) (TC 2.A.34) antiporter family.

It is found in the cell inner membrane. It catalyses the reaction 2 Na(+)(in) + 3 H(+)(out) = 2 Na(+)(out) + 3 H(+)(in). Functionally, na(+)/H(+) antiporter that extrudes sodium in exchange for external protons. The sequence is that of Na(+)/H(+) antiporter NhaB from Shewanella piezotolerans (strain WP3 / JCM 13877).